The sequence spans 240 residues: Nudix hydrolase 3 (240 aa).

One can recognise a Nudix hydrolase domain in the interval 50-190 (NSAMSVLIPL…RMKYTLPSFD (141 aa)). Residues 89–110 (GRMDPGETTTETALRETFEEIG) carry the Nudix box motif. Positions 104 and 108 each coordinate Mg(2+).

Belongs to the Nudix hydrolase family. PCD1 subfamily. Requires Mn(2+) as cofactor. The cofactor is Mg(2+).

Its function is as follows. Probably mediates the hydrolysis of some nucleoside diphosphate derivatives. In Caenorhabditis elegans, this protein is Nudix hydrolase 3 (ndx-3).